A 579-amino-acid chain; its full sequence is SLAIN motif-containing protein 1 (579 aa).

6 disordered regions span residues 1-21 (MMAE…GPGP), 60-95 (LLLQ…GPGA), 135-162 (GGGG…PPTL), 233-258 (YTSR…LEDD), 289-313 (STSA…TCSD), and 347-454 (IPHS…PGQI). A compositionally biased stretch (low complexity) spans 9–21 (ASPVAASGAGPGP). Residues 21 to 56 (PVVNAELEVKKLQELVRKLEKQNEQLRSRAASAAAA) adopt a coiled-coil conformation. Positions 63–73 (QPPPPSAPPPA) are enriched in pro residues. The segment covering 141-154 (EPGTAGTPPGEAAT) has biased composition (low complexity). A compositionally biased stretch (polar residues) spans 233-243 (YTSRGSPLSPQ). A Phosphoserine modification is found at Ser241. Composition is skewed to low complexity over residues 244–253 (SSIDSELSTS) and 289–305 (STSA…SLSS). Positions 362–373 (SPSTQYFPSNNF) are enriched in polar residues. Over residues 374–390 (QQPQYYPPQAQTADQQP) the composition is skewed to low complexity. Residues 412–432 (AAASSNLSSPVTVRSSQSFDS) show a composition bias toward polar residues. Arg469 bears the Asymmetric dimethylarginine mark. A disordered region spans residues 479–516 (SPTVQGSSSSGSSGSSGGSGSGMPLSNGTQLYSTTGIP). Polar residues predominate over residues 502–516 (PLSNGTQLYSTTGIP). Arg554 carries the post-translational modification Asymmetric dimethylarginine.

Belongs to the SLAIN motif-containing family. Interacts with MAPRE1, MAPRE2, MAPRE3 and CKAP5. Interacts with ZDHHC17 (via ANK repeats). In terms of tissue distribution, expressed in embryonic stem cells. Expressed in adult bone marrow, brain, kidney, lung, testis and thymus. Expressed in colon. Isoform 1 is highly expressed in brain. Isoform 2 is more widely expressed in bone marrow, brain, colon, kidney, lung and thymus.

The protein localises to the cytoplasm. The protein resides in the cytoskeleton. Its function is as follows. Microtubule plus-end tracking protein that might be involved in the regulation of cytoplasmic microtubule dynamics, microtubule organization and microtubule elongation. The polypeptide is SLAIN motif-containing protein 1 (Slain1) (Mus musculus (Mouse)).